A 408-amino-acid chain; its full sequence is Serine-rich antigen (408 aa).

Tandem repeats lie at residues 209–214 (SVAQSE) and 230–235 (SVAQSE). The interval 209 to 235 (SVAQSEEHGSDSMSQSYNTCGSVAQSE) is 2 X 6 AA repeats of S-V-A-Q-S-E.

This sequence belongs to the mycobacterial PPE family.

The polypeptide is Serine-rich antigen (sra) (Mycobacterium leprae (strain TN)).